Here is a 30-residue protein sequence, read N- to C-terminus: Circulin A (30 aa).

A cross-link (cyclopeptide (Gly-Asn)) is located at residues 1–30; the sequence is GIPCGESCVWIPCISAALGCSCKNKVCYRN. Intrachain disulfides connect Cys-4-Cys-20, Cys-8-Cys-22, and Cys-13-Cys-27.

In terms of processing, this is a cyclic peptide. In terms of tissue distribution, expressed in fruit, pedicel, root and stem but not in leaf (at protein level).

Its function is as follows. Probably participates in a plant defense mechanism. The protein is Circulin A of Chassalia chartacea (Chassalia curviflora).